A 461-amino-acid chain; its full sequence is Argininosuccinate lyase (461 aa).

Belongs to the lyase 1 family. Argininosuccinate lyase subfamily.

The protein localises to the cytoplasm. The catalysed reaction is 2-(N(omega)-L-arginino)succinate = fumarate + L-arginine. It functions in the pathway amino-acid biosynthesis; L-arginine biosynthesis; L-arginine from L-ornithine and carbamoyl phosphate: step 3/3. The polypeptide is Argininosuccinate lyase (Aeromonas salmonicida (strain A449)).